The chain runs to 174 residues: Protein MOTHER of FT and TFL1 homolog 2 (174 aa).

Belongs to the phosphatidylethanolamine-binding protein family.

Functionally, may form complexes with phosphorylated ligands by interfering with kinases and their effectors. The polypeptide is Protein MOTHER of FT and TFL1 homolog 2 (Oryza sativa subsp. japonica (Rice)).